Consider the following 257-residue polypeptide: Cytoplasmic envelopment protein 1 (257 aa).

It belongs to the herpesviridae cytoplasmic envelopment protein 1 family.

The protein resides in the virion. Its subcellular location is the virion tegument. It localises to the host cytoplasm. It is found in the host Golgi apparatus. Plays a critical role in cytoplasmic virus egress. Participates in the final step of tegumentation and envelope acquisition within the host cytoplasm. This is Cytoplasmic envelopment protein 1 (42) from Connochaetes taurinus (Blue wildebeest).